A 302-amino-acid chain; its full sequence is ATP synthase gamma chain, sodium ion specific (302 aa).

This sequence belongs to the ATPase gamma chain family. F-type ATPases have 2 components, CF(1) - the catalytic core - and CF(0) - the membrane proton channel. CF(1) has five subunits: alpha(3), beta(3), gamma(1), delta(1), epsilon(1). CF(0) has three main subunits: a, b and c.

The protein resides in the cell membrane. With respect to regulation, inhibited by nitrate. Its function is as follows. Produces ATP from ADP in the presence of a proton gradient across the membrane. The gamma chain is believed to be important in regulating ATPase activity and the flow of protons through the CF(0) complex. The sequence is that of ATP synthase gamma chain, sodium ion specific (atpG) from Acetobacterium woodii (strain ATCC 29683 / DSM 1030 / JCM 2381 / KCTC 1655 / WB1).